A 400-amino-acid polypeptide reads, in one-letter code: LIM homeobox transcription factor 1-beta.1 (400 aa).

LIM zinc-binding domains follow at residues 54–113 (AVCE…LFAA) and 114–175 (KCSG…EKDL). The interval 175–228 (LLSSGSPDDSDSVKSDDEEGDVKPGKGRVNQGKGSDDGKDPRRPKRPRTILTTQ) is disordered. A DNA-binding region (homeobox) is located at residues 218-277 (PKRPRTILTTQQRRAFKASFEVSSKPCRKVRETLAAETGLSVRVVQVWFQNQRAKIKKLA).

In terms of tissue distribution, shows a temporal expression pattern in three main areas: neural, kidney and limbs. From stage 13 onwards, expressed in regions of the nervous system including the placodes and otic vesicles, eye, specific sets of neurons, and in discreet regions of the neural tube. From stage 13, also expressed in the presumptive pronephros, and from stage 27 expression is predominant in the capsule of the pronephric glomus. Also expressed in the developing forelimbs and hindlimbs. In metamorphosing tadpoles, expressed in the eye, brain, muscle and mesonephric kidney.

It localises to the nucleus. Its function is as follows. Required for early specification of the kidney glomus, lying upstream of wt1 in the pathway controlling glomus differentiation. The balance in levels and expression patterns of binding partners such as lhx1/lim-1 influences differentiation into glomus or tubule derivatives. Involved in specification of serotonergic neurons. The polypeptide is LIM homeobox transcription factor 1-beta.1 (Xenopus laevis (African clawed frog)).